A 263-amino-acid polypeptide reads, in one-letter code: Taurine import ATP-binding protein TauB (263 aa).

The ABC transporter domain maps to 4–235 (LTAEAISLSF…RYAAGETVRS (232 aa)). 40 to 47 (GPSGCGKS) is a binding site for ATP.

The protein belongs to the ABC transporter superfamily. Taurine importer (TC 3.A.1.17.1) family. As to quaternary structure, the complex is composed of two ATP-binding proteins (TauB), two transmembrane proteins (TauC) and a solute-binding protein (TauA).

Its subcellular location is the cell inner membrane. It catalyses the reaction taurine(out) + ATP + H2O = taurine(in) + ADP + phosphate + H(+). Part of the ABC transporter complex TauABC involved in taurine import. Responsible for energy coupling to the transport system. The polypeptide is Taurine import ATP-binding protein TauB (Pseudomonas aeruginosa (strain ATCC 15692 / DSM 22644 / CIP 104116 / JCM 14847 / LMG 12228 / 1C / PRS 101 / PAO1)).